A 299-amino-acid polypeptide reads, in one-letter code: Delta-9 desaturase-like 5 protein (299 aa).

The next 2 membrane-spanning stretches (helical) occupy residues 31–51 (ADIIRALTVINVHFLCLLAPF) and 55–75 (WEALRFGFVLYALTSLSITFS). The Histidine box-1 motif lies at 77–82 (HRNLAH). Positions 114-118 (HRFHH) match the Histidine box-2 motif. 2 consecutive transmembrane segments (helical) span residues 174–194 (IGFHVLMFWTVLYLYGGLPYL) and 199–219 (GVGGVIGYHVTWLVNSACHIW). The short motif at 246–250 (HNNHH) is the Histidine box-3 element.

Belongs to the fatty acid desaturase type 1 family. Requires Fe cation as cofactor.

Its subcellular location is the endoplasmic reticulum membrane. It functions in the pathway lipid metabolism; polyunsaturated fatty acid biosynthesis. The polypeptide is Delta-9 desaturase-like 5 protein (Arabidopsis thaliana (Mouse-ear cress)).